We begin with the raw amino-acid sequence, 139 residues long: ATP synthase epsilon chain (139 aa).

It belongs to the ATPase epsilon chain family. In terms of assembly, F-type ATPases have 2 components, CF(1) - the catalytic core - and CF(0) - the membrane proton channel. CF(1) has five subunits: alpha(3), beta(3), gamma(1), delta(1), epsilon(1). CF(0) has three main subunits: a, b and c.

The protein localises to the cell inner membrane. In terms of biological role, produces ATP from ADP in the presence of a proton gradient across the membrane. The polypeptide is ATP synthase epsilon chain (Erwinia tasmaniensis (strain DSM 17950 / CFBP 7177 / CIP 109463 / NCPPB 4357 / Et1/99)).